A 367-amino-acid chain; its full sequence is Isocitrate dehydrogenase [NAD] regulatory subunit 1, mitochondrial (367 aa).

A mitochondrion-targeting transit peptide spans 1–25 (MSRRSLTLLKNLARNANGSGIQTRS).

The protein belongs to the isocitrate and isopropylmalate dehydrogenases family. In terms of assembly, heterooligomer of catalytic and regulatory subunits. Ubiquitous. Predominantly expressed in roots, stems and leaves.

Its subcellular location is the mitochondrion. In terms of biological role, performs an essential role in the oxidative function of the citric acid cycle. This Arabidopsis thaliana (Mouse-ear cress) protein is Isocitrate dehydrogenase [NAD] regulatory subunit 1, mitochondrial (IDH1).